The primary structure comprises 432 residues: Ribosomal protein uS12 methylthiotransferase RimO (432 aa).

An MTTase N-terminal domain is found at 4 to 122; the sequence is NKVDIITLGC…LISDLGKSYH (119 aa). [4Fe-4S] cluster-binding residues include Cys-13, Cys-51, Cys-85, Cys-146, Cys-150, and Cys-153. Residues 132-363 form the Radical SAM core domain; the sequence is TTPRHYAYVK…MRVQEGISAD (232 aa). Residues 366 to 432 enclose the TRAM domain; it reads ASKVGQTFRV…AFDLYGKVLN (67 aa).

Belongs to the methylthiotransferase family. RimO subfamily. The cofactor is [4Fe-4S] cluster.

Its subcellular location is the cytoplasm. The enzyme catalyses L-aspartate(89)-[ribosomal protein uS12]-hydrogen + (sulfur carrier)-SH + AH2 + 2 S-adenosyl-L-methionine = 3-methylsulfanyl-L-aspartate(89)-[ribosomal protein uS12]-hydrogen + (sulfur carrier)-H + 5'-deoxyadenosine + L-methionine + A + S-adenosyl-L-homocysteine + 2 H(+). Its function is as follows. Catalyzes the methylthiolation of an aspartic acid residue of ribosomal protein uS12. This chain is Ribosomal protein uS12 methylthiotransferase RimO, found in Parabacteroides distasonis (strain ATCC 8503 / DSM 20701 / CIP 104284 / JCM 5825 / NCTC 11152).